Here is a 159-residue protein sequence, read N- to C-terminus: Transcription elongation factor GreA (159 aa).

It belongs to the GreA/GreB family.

Functionally, necessary for efficient RNA polymerase transcription elongation past template-encoded arresting sites. The arresting sites in DNA have the property of trapping a certain fraction of elongating RNA polymerases that pass through, resulting in locked ternary complexes. Cleavage of the nascent transcript by cleavage factors such as GreA or GreB allows the resumption of elongation from the new 3'terminus. GreA releases sequences of 2 to 3 nucleotides. This Buchnera aphidicola subsp. Baizongia pistaciae (strain Bp) protein is Transcription elongation factor GreA.